Consider the following 462-residue polypeptide: 2-amino-5-chloromuconic acid deaminase (462 aa).

Catalysis depends on charge relay system residues K79 and S156. S180 functions as the Acyl-ester intermediate in the catalytic mechanism.

Belongs to the amidase family.

It carries out the reaction (2Z,4E)-2-aminomuconate + H2O = (3E)-2-oxohex-3-enedioate + NH4(+). It functions in the pathway xenobiotic degradation; nitrobenzene degradation. The protein operates within xenobiotic degradation; 4-chloronitrobenzene degradation. Its function is as follows. Involved in the biodegradation of nitroaromatic and chlorinated nitroaromatic compounds. Catalyzes the conversion of 2-amino-5-chloromuconic acid into 2-hydroxy-5-chloromuconic acid and ammonia. Also able to catalyze the transformation of 2-aminomuconic acid into 2-hydroxymuconic acid. The chain is 2-amino-5-chloromuconic acid deaminase from Comamonas testosteroni (Pseudomonas testosteroni).